Consider the following 431-residue polypeptide: Histidine--tRNA ligase (431 aa).

It belongs to the class-II aminoacyl-tRNA synthetase family. Homodimer.

The protein localises to the cytoplasm. It carries out the reaction tRNA(His) + L-histidine + ATP = L-histidyl-tRNA(His) + AMP + diphosphate + H(+). This Leifsonia xyli subsp. xyli (strain CTCB07) protein is Histidine--tRNA ligase (hisS).